We begin with the raw amino-acid sequence, 188 residues long: Mitochondrial import receptor subunit TOM20 homolog (188 aa).

Residues 1–12 (MTDTLFGFNKSN) are Mitochondrial intermembrane-facing. A helical transmembrane segment spans residues 13-31 (VVLAAGVAGAAFLGYCIYF). Over 32 to 188 (DHKRINAPDY…ELIDDTDDLE (157 aa)) the chain is Cytoplasmic. Disordered stretches follow at residues 48–67 (KRRA…PAGG) and 155–188 (ADEA…DDLE). Over residues 58–67 (MAARRPPAGG) the composition is skewed to low complexity.

This sequence belongs to the Tom20 family. As to quaternary structure, forms part of the preprotein translocase complex of the outer mitochondrial membrane (TOM complex).

The protein localises to the mitochondrion outer membrane. Its function is as follows. Central component of the receptor complex responsible for the recognition and translocation of cytosolically synthesized mitochondrial preproteins. Together with TOM22 functions as the transit peptide receptor at the surface of the mitochondrion outer membrane and facilitates the movement of preproteins into the translocation pore. The chain is Mitochondrial import receptor subunit TOM20 homolog (tomm-20) from Caenorhabditis briggsae.